Consider the following 122-residue polypeptide: Small ribosomal subunit protein uS13 (122 aa).

The interval 95-122 (GLPVRGQRTHTNARTRKGPRRGTVGKKK) is disordered.

This sequence belongs to the universal ribosomal protein uS13 family. In terms of assembly, part of the 30S ribosomal subunit. Forms a loose heterodimer with protein S19. Forms two bridges to the 50S subunit in the 70S ribosome.

Located at the top of the head of the 30S subunit, it contacts several helices of the 16S rRNA. In the 70S ribosome it contacts the 23S rRNA (bridge B1a) and protein L5 of the 50S subunit (bridge B1b), connecting the 2 subunits; these bridges are implicated in subunit movement. Contacts the tRNAs in the A and P-sites. The polypeptide is Small ribosomal subunit protein uS13 (Nitratidesulfovibrio vulgaris (strain ATCC 29579 / DSM 644 / CCUG 34227 / NCIMB 8303 / VKM B-1760 / Hildenborough) (Desulfovibrio vulgaris)).